The following is a 200-amino-acid chain: Snake venom serine protease VaSP1 (200 aa).

Positions valine 1–lysine 200 constitute a Peptidase S1 domain. Active-site charge relay system residues include aspartate 88 and serine 182.

In terms of assembly, monomer. N-glycosylated. The protein exist in multiple isoforms. In terms of tissue distribution, expressed by the venom gland.

It is found in the secreted. Inhibited by Pefabloc (90% inhibition), DTT (90%), Zn(2+) (80%), trypsin inhibitor II (50%), and benzamidine (45%), but not inhibited by EDTA, Ca(2+), Mg(2+) and L-Cys. Snake venom serine protease active on several blood coagulation enzymes. It completely cleaves fibrinogen Aalpha chain (FGA) after 120 minutes, partially cleaves Bbeta chain (FGB) (overnight) and has no activity on gamma chain. It does not release fibrinopeptides A and/or B exclusively, since the enzyme does not provoke fibrin polymerisation. It also degrades fibrin as efficiently as plasmin, and exhibits potent ability to cleave plasminogen and prothrombin, as well as heavy chain of factor X (F10). In vitro, it cleaves insulin B-chain (at positions His38-Leu39, Ala40-Leu41 and Tyr16-Leu17). The chain is Snake venom serine protease VaSP1 from Vipera ammodytes ammodytes (Western sand viper).